The primary structure comprises 564 residues: NAC domain-containing protein 16 (564 aa).

One can recognise an NAC domain in the interval Ser16–Lys166. A DNA-binding region spans residues Val115–Lys172. A helical membrane pass occupies residues Phe535 to Val555.

In terms of tissue distribution, expressed in roots, rosette leaves, shoot apex, stems and flowers.

Its subcellular location is the membrane. It is found in the nucleus. Its function is as follows. Transcriptional activator activated by proteolytic cleavage through regulated intramembrane proteolysis (RIP). Transcriptional activator that promotes leaf senescence by up-regulating senescence-associated genes in response to developmental and stress-induced senescence signals. Functions in salt and oxidative stress-responsive signaling pathways. Binds to the promoter of NAC029/NAP and NAC059/ORS1 genes. This Arabidopsis thaliana (Mouse-ear cress) protein is NAC domain-containing protein 16.